The primary structure comprises 274 residues: Non-heme haloperoxidase (274 aa).

Positions 22–254 (PIMFHHGWPL…RLKVYPGLSH (233 aa)) constitute an AB hydrolase-1 domain. Residues serine 95, aspartate 225, and histidine 254 contribute to the active site.

The protein belongs to the AB hydrolase superfamily. Bacterial non-heme haloperoxidase / perhydrolase family.

This is Non-heme haloperoxidase (thcF) from Rhodococcus erythropolis (Arthrobacter picolinophilus).